We begin with the raw amino-acid sequence, 428 residues long: Tyrosine--tRNA ligase (428 aa).

Tyr-41 serves as a coordination point for L-tyrosine. Positions 46 to 55 match the 'HIGH' region motif; that stretch reads PTADSLHLGH. L-tyrosine is bound by residues Tyr-179 and Gln-183. Residues 239–243 carry the 'KMSKS' region motif; sequence KFGKT. Lys-242 is an ATP binding site. Positions 361-418 constitute an S4 RNA-binding domain; that stretch reads ADLMQALVDSELQPSRGQARKTIASNAVTINGEKQSDPEYFFQDSDILFGRYTLLRRG.

Belongs to the class-I aminoacyl-tRNA synthetase family. TyrS type 1 subfamily. Homodimer.

Its subcellular location is the cytoplasm. The enzyme catalyses tRNA(Tyr) + L-tyrosine + ATP = L-tyrosyl-tRNA(Tyr) + AMP + diphosphate + H(+). Functionally, catalyzes the attachment of tyrosine to tRNA(Tyr) in a two-step reaction: tyrosine is first activated by ATP to form Tyr-AMP and then transferred to the acceptor end of tRNA(Tyr). The sequence is that of Tyrosine--tRNA ligase from Citrobacter koseri (strain ATCC BAA-895 / CDC 4225-83 / SGSC4696).